The chain runs to 525 residues: Keratin, type II cytoskeletal 71 (525 aa).

The tract at residues 1–131 (MSRQFTCKSG…DPEIQKVRAQ (131 aa)) is head. A coil 1A region spans residues 132–167 (EREQIKALNNKFASFIDKVRFLEQQNQVLETKWELL). An IF rod domain is found at 132–445 (EREQIKALNN…KLLESEECRM (314 aa)). A linker 1 region spans residues 168 to 186 (QQLDLNNCKNNLEPILEGY). The coil 1B stretch occupies residues 187–278 (ISNLRKQLET…CLYEAEIAQI (92 aa)). The segment at 279–302 (QSHISDMSVILSMDNNRDLNLDSI) is linker 12. Residues 303–441 (IDEVRAQYED…ATYRKLLESE (139 aa)) are coil 2. A tail region spans residues 442 to 525 (ECRMSGEFPS…LSAPSKKASR (84 aa)). Positions 492–525 (VRGGESRSRSSTTDYKDALGKGSSLSAPSKKASR) are disordered. Residues 495-510 (GESRSRSSTTDYKDAL) are compositionally biased toward basic and acidic residues.

It belongs to the intermediate filament family. Heterodimer of a type I and a type II keratin. Associates with KRT16 and/or KRT17.

The protein localises to the cytoplasm. The protein resides in the cytoskeleton. Plays a central role in hair formation. Essential component of keratin intermediate filaments in the inner root sheath (IRS) of the hair follicle. The polypeptide is Keratin, type II cytoskeletal 71 (KRT71) (Bos taurus (Bovine)).